The primary structure comprises 114 residues: MTRVKRGYVARRHRNRILALTSGFQGAHSKLFRTANQQGMKALTYAYRDRANCKRDFRRLWITRINAAARENQITYNNMIHSLYMNQIHLNRKILAQIAALDKDCFVEILRIIK.

It belongs to the bacterial ribosomal protein bL20 family.

The protein localises to the plastid. It is found in the chloroplast. In terms of biological role, binds directly to 23S ribosomal RNA and is necessary for the in vitro assembly process of the 50S ribosomal subunit. It is not involved in the protein synthesizing functions of that subunit. This chain is Large ribosomal subunit protein bL20c, found in Psilotum nudum (Whisk fern).